The chain runs to 180 residues: Negative modulator of initiation of replication (180 aa).

Interaction with DNA stretches follow at residues 86 to 87, 115 to 119, and 149 to 155; these read AV, RTRVY, and NTNTGRK.

Belongs to the SeqA family. In terms of assembly, homodimer. Polymerizes to form helical filaments.

The protein resides in the cytoplasm. Functionally, negative regulator of replication initiation, which contributes to regulation of DNA replication and ensures that replication initiation occurs exactly once per chromosome per cell cycle. Binds to pairs of hemimethylated GATC sequences in the oriC region, thus preventing assembly of replication proteins and re-initiation at newly replicated origins. Repression is relieved when the region becomes fully methylated. In Salmonella typhimurium (strain LT2 / SGSC1412 / ATCC 700720), this protein is Negative modulator of initiation of replication.